A 331-amino-acid polypeptide reads, in one-letter code: tRNA(Ile)-lysidine synthase (331 aa).

Position 29-34 (29-34 (SGGPDS)) interacts with ATP.

Belongs to the tRNA(Ile)-lysidine synthase family.

It is found in the cytoplasm. The enzyme catalyses cytidine(34) in tRNA(Ile2) + L-lysine + ATP = lysidine(34) in tRNA(Ile2) + AMP + diphosphate + H(+). Functionally, ligates lysine onto the cytidine present at position 34 of the AUA codon-specific tRNA(Ile) that contains the anticodon CAU, in an ATP-dependent manner. Cytidine is converted to lysidine, thus changing the amino acid specificity of the tRNA from methionine to isoleucine. This chain is tRNA(Ile)-lysidine synthase, found in Chlorobaculum tepidum (strain ATCC 49652 / DSM 12025 / NBRC 103806 / TLS) (Chlorobium tepidum).